We begin with the raw amino-acid sequence, 351 residues long: Blue-sensitive opsin (351 aa).

The Extracellular portion of the chain corresponds to 1-40; it reads MKQVPEFHEDFYIPIPLDINNLSAYSPFLVPQDHLGNQGI. Asn-21 carries an N-linked (GlcNAc...) asparagine glycan. Residues 41–65 form a helical membrane-spanning segment; it reads FMAMSVFMFFIFIGGASINILTILC. Topologically, residues 66 to 77 are cytoplasmic; the sequence is TIQFKKLRSHLN. A helical transmembrane segment spans residues 78 to 103; that stretch reads YILVNLSIANLFVAIFGSPLSFYSFF. Over 104 to 117 the chain is Extracellular; that stretch reads NRYFIFGATACKIE. Cys-114 and Cys-191 are joined by a disulfide. Residues 118 to 137 form a helical membrane-spanning segment; it reads GFLATLGGMVGLWSLAVVAF. Over 138–156 the chain is Cytoplasmic; it reads ERWLVICKPLGNFTFKTPH. A helical membrane pass occupies residues 157 to 180; the sequence is AIAGCILPWISALAASLPPLFGWS. Topologically, residues 181–206 are extracellular; sequence RYIPEGLQCSCGPDWYTTNNKYNNES. Residues 207–234 traverse the membrane as a helical segment; that stretch reads YVMFLFCFCFAVPFGTIVFCYGQLLITL. Residues 235-256 are Cytoplasmic-facing; that stretch reads KLAAKAQADSASTQKAEREVTK. A helical transmembrane segment spans residues 257 to 280; sequence MVVVMVLGFLVCWAPYASFSLWIV. Topologically, residues 281-288 are extracellular; that stretch reads SHRGEEFD. Residues 289–313 traverse the membrane as a helical segment; it reads LRMATIPSCLSKASTVYNPVIYVLM. Lys-300 is modified (N6-(retinylidene)lysine). The Cytoplasmic segment spans residues 314–351; it reads NKQFRSCMMKMVCGKNIEEDEASTSSQVTQVSSVAPEK.

This sequence belongs to the G-protein coupled receptor 1 family. Opsin subfamily. Post-translationally, phosphorylated on some or all of the serine and threonine residues present in the C-terminal region. The color pigments are found in the cone photoreceptor cells.

It localises to the membrane. Its function is as follows. Visual pigments are the light-absorbing molecules that mediate vision. They consist of an apoprotein, opsin, covalently linked to cis-retinal. This chain is Blue-sensitive opsin, found in Carassius auratus (Goldfish).